Here is a 273-residue protein sequence, read N- to C-terminus: MYPSCSLLQRLVWFPFLALVATQLLFIRNVSSLNLTNEYLHHKCLVSEGKYKPGSKYEYILNDHIRFLAAGNFRSGSMHMTSGLKPNAVTILYQCRGDSYNSKCRSCYAAGISGLRRRCPRNKGGIIWFDQCFVEITSISVIDFNISKINYENNFPLHNPNRVSGDIKSFNNETMALLKELALKANNKDNMDNGKMALYASGEKRVGTKKVYAMVQCMRDLVKPKMCKECLESIIKEFPECCDGKQGGRILGTSCDFRYELYPFLRTSDSKTV.

The first 32 residues, 1 to 32 (MYPSCSLLQRLVWFPFLALVATQLLFIRNVSS), serve as a signal peptide directing secretion. 2 consecutive Gnk2-homologous domains span residues 39 to 141 (YLHH…SISV) and 151 to 264 (YENN…LYPF).

It belongs to the cysteine-rich repeat secretory protein family.

It localises to the secreted. The chain is Putative cysteine-rich repeat secretory protein 40 (CRRSP40) from Arabidopsis thaliana (Mouse-ear cress).